The following is a 157-amino-acid chain: uncharacterized protein (157 aa).

The N-terminal stretch at methionine 1–glycine 23 is a signal peptide.

Its subcellular location is the secreted. This is an uncharacterized protein from Mus musculus (Mouse).